The sequence spans 95 residues: DNA-directed RNA polymerase subunit Rpo11 (95 aa).

It belongs to the archaeal Rpo11/eukaryotic RPB11/RPC19 RNA polymerase subunit family. In terms of assembly, part of the RNA polymerase complex.

The protein resides in the cytoplasm. The catalysed reaction is RNA(n) + a ribonucleoside 5'-triphosphate = RNA(n+1) + diphosphate. In terms of biological role, DNA-dependent RNA polymerase (RNAP) catalyzes the transcription of DNA into RNA using the four ribonucleoside triphosphates as substrates. The protein is DNA-directed RNA polymerase subunit Rpo11 of Thermococcus onnurineus (strain NA1).